Consider the following 369-residue polypeptide: MFRIYTAHSLGQKWVENYQECSAIFACIVGFTETGLIPGISAAGATPEARKYTAIADAEFLINGVQSSYHYPLPPLSQGVSPVFITRAVVEACNIPIYLFNAGLPTPPSVPYIDLKGKSANCLTTGKALPLPLVYELFQQGLKWGKKLAKDHTKNYLILSECVVGGTTTALSILTGLGINATEKVNSSHPHCNHKQKELIVKEGFKNAGYSYNLKPINPFELVAAVGDPMQIVVAGMAISASLKTGVMLAGGTQMLAVYALIKSIINTSKYQGNLDNIIVGTTRWVAEDLTGDTVTLAESIGTVPLFATQLNFSSSSYQQLQMYEQGYVKEGVGAGGCAIAASLSYNWTQEKLLNRIENLVNNYHRIRN.

This sequence belongs to the UPF0284 family.

The sequence is that of UPF0284 protein cce_1085 from Crocosphaera subtropica (strain ATCC 51142 / BH68) (Cyanothece sp. (strain ATCC 51142)).